The chain runs to 1116 residues: Error-prone DNA polymerase (1116 aa).

Belongs to the DNA polymerase type-C family. DnaE2 subfamily.

The protein resides in the cytoplasm. It catalyses the reaction DNA(n) + a 2'-deoxyribonucleoside 5'-triphosphate = DNA(n+1) + diphosphate. DNA polymerase involved in damage-induced mutagenesis and translesion synthesis (TLS). It is not the major replicative DNA polymerase. In Sinorhizobium medicae (strain WSM419) (Ensifer medicae), this protein is Error-prone DNA polymerase.